The primary structure comprises 57 residues: Large ribosomal subunit protein bL32 (57 aa).

The protein belongs to the bacterial ribosomal protein bL32 family.

The protein is Large ribosomal subunit protein bL32 of Halothermothrix orenii (strain H 168 / OCM 544 / DSM 9562).